Reading from the N-terminus, the 546-residue chain is Chaperonin GroEL 2 (546 aa).

ATP contacts are provided by residues 30–33 (TLGP), lysine 51, 87–91 (DGTTT), glycine 415, and aspartate 496.

The protein belongs to the chaperonin (HSP60) family. In terms of assembly, forms a cylinder of 14 subunits composed of two heptameric rings stacked back-to-back. Interacts with the co-chaperonin GroES.

The protein localises to the cytoplasm. The enzyme catalyses ATP + H2O + a folded polypeptide = ADP + phosphate + an unfolded polypeptide.. In terms of biological role, together with its co-chaperonin GroES, plays an essential role in assisting protein folding. The GroEL-GroES system forms a nano-cage that allows encapsulation of the non-native substrate proteins and provides a physical environment optimized to promote and accelerate protein folding. The chain is Chaperonin GroEL 2 from Bradyrhizobium sp. (strain ORS 278).